Reading from the N-terminus, the 842-residue chain is Glycogen phosphorylase, muscle form (842 aa).

Ser2 is modified (N-acetylserine). A Phosphoserine; by PHK; in form phosphorylase A modification is found at Ser15. AMP contacts are provided by Asp43 and Tyr76. Residues Tyr204 and Tyr227 each carry the phosphotyrosine modification. 310-319 (RRFKSSKFGC) is an AMP binding site. At Ser430 the chain carries Phosphoserine. Phosphotyrosine is present on Tyr473. Ser514 is modified (phosphoserine). Lys681 carries the post-translational modification N6-(pyridoxal phosphate)lysine. Phosphoserine occurs at positions 747 and 748.

Belongs to the glycogen phosphorylase family. In terms of assembly, homodimer. Homotetramer; to form the enzymatically active phosphorylase A. The cofactor is pyridoxal 5'-phosphate. Phosphorylation of Ser-15 converts phosphorylase B (unphosphorylated) to phosphorylase A.

It catalyses the reaction [(1-&gt;4)-alpha-D-glucosyl](n) + phosphate = [(1-&gt;4)-alpha-D-glucosyl](n-1) + alpha-D-glucose 1-phosphate. Allosterically regulated through the non-covalent binding of metabolites, being activated by AMP and inhibited by ATP, ADP, and glucose-6-phosphate. The activity is also controlled by post-translational modifications including phosphorylation. Functionally, allosteric enzyme that catalyzes the rate-limiting step in glycogen catabolism, the phosphorolytic cleavage of glycogen to produce glucose-1-phosphate, and plays a central role in maintaining cellular and organismal glucose homeostasis. The protein is Glycogen phosphorylase, muscle form of Macaca fascicularis (Crab-eating macaque).